Consider the following 365-residue polypeptide: Carbamoyl phosphate synthase small chain (365 aa).

2 CPSase regions span residues 1 to 166 (MKRQ…PSPG) and 1 to 169 (MKRQ…GRGH). Residues Ser45, Gly218, and Gly220 each contribute to the L-glutamine site. Residues 170–357 (RVVLVDFGMK…LTMIENFKKE (188 aa)) form the Glutamine amidotransferase type-1 domain. Cys245 functions as the Nucleophile in the catalytic mechanism. Leu246, Gln249, Asn287, Gly289, and Tyr290 together coordinate L-glutamine. Catalysis depends on residues His330 and Glu332.

The protein belongs to the CarA family. As to quaternary structure, composed of two chains; the small (or glutamine) chain promotes the hydrolysis of glutamine to ammonia, which is used by the large (or ammonia) chain to synthesize carbamoyl phosphate. Tetramer of heterodimers (alpha,beta)4.

The catalysed reaction is hydrogencarbonate + L-glutamine + 2 ATP + H2O = carbamoyl phosphate + L-glutamate + 2 ADP + phosphate + 2 H(+). It carries out the reaction L-glutamine + H2O = L-glutamate + NH4(+). The protein operates within amino-acid biosynthesis; L-arginine biosynthesis; carbamoyl phosphate from bicarbonate: step 1/1. It participates in pyrimidine metabolism; UMP biosynthesis via de novo pathway; (S)-dihydroorotate from bicarbonate: step 1/3. Functionally, small subunit of the glutamine-dependent carbamoyl phosphate synthetase (CPSase). CPSase catalyzes the formation of carbamoyl phosphate from the ammonia moiety of glutamine, carbonate, and phosphate donated by ATP, constituting the first step of 2 biosynthetic pathways, one leading to arginine and/or urea and the other to pyrimidine nucleotides. The small subunit (glutamine amidotransferase) binds and cleaves glutamine to supply the large subunit with the substrate ammonia. The polypeptide is Carbamoyl phosphate synthase small chain (Bacillus cereus (strain ZK / E33L)).